Consider the following 556-residue polypeptide: Formate--tetrahydrofolate ligase (556 aa).

65 to 72 (TPAGEGKT) lines the ATP pocket.

It belongs to the formate--tetrahydrofolate ligase family.

It carries out the reaction (6S)-5,6,7,8-tetrahydrofolate + formate + ATP = (6R)-10-formyltetrahydrofolate + ADP + phosphate. It functions in the pathway one-carbon metabolism; tetrahydrofolate interconversion. The polypeptide is Formate--tetrahydrofolate ligase (Alkaliphilus oremlandii (strain OhILAs) (Clostridium oremlandii (strain OhILAs))).